We begin with the raw amino-acid sequence, 379 residues long: Probable G-protein coupled receptor No18 (379 aa).

The Extracellular segment spans residues 5-36 (EASITGRTAPELNASAAPLDDERELGETVAAT). N17 is a glycosylation site (N-linked (GlcNAc...) asparagine). A helical transmembrane segment spans residues 37–58 (ALLLAIILVTIVGNSLVIISVF). The Cytoplasmic segment spans residues 59–68 (TYRPLRSVQN). Residues 69–90 (FFVVSLAVADLTVALFVLPLNV) form a helical membrane-spanning segment. Topologically, residues 91–107 (AYRLLNQWLLGSYLCQM) are extracellular. Residues C105 and C184 are joined by a disulfide bond. The chain crosses the membrane as a helical span at residues 108–128 (WLTCDILCCTSSILNLCVIAL). Topologically, residues 129–148 (DRYWAITDPINYAQKRTIRR) are cytoplasmic. Residues 149–171 (VNTMIAAVWALSLVISVPPLLGW) form a helical membrane-spanning segment. Topologically, residues 172-196 (NDWPAQFTEDTPCTLTQERLFVVYS) are extracellular. Residues 197–218 (SSGSFFIPLIIMSVVYAKIFFA) traverse the membrane as a helical segment. The Cytoplasmic segment spans residues 219–303 (TKRRLRERTR…LSKERKAARV (85 aa)). The disordered stretch occupies residues 234-276 (AVPAPPQRTSSRPLAELESVASQEDETEPSPEPEPLSSRADKP). A helical membrane pass occupies residues 304-325 (LGVIMGVFVVCWLPFFLMYAIV). Topologically, residues 326–340 (PFCTNCAPPSQRVVD) are extracellular. Residues 341–362 (FVTWLGYVNSSLNPIIYTIYNK) form a helical membrane-spanning segment. The Cytoplasmic segment spans residues 363–375 (DFRTAFSRLLRCD).

Belongs to the G-protein coupled receptor 1 family.

The protein resides in the cell membrane. Probable G-protein coupled receptor for an amine. The protein is Probable G-protein coupled receptor No18 of Amphibalanus amphitrite (Striped barnacle).